Here is a 336-residue protein sequence, read N- to C-terminus: Ornithine carbamoyltransferase (336 aa).

Carbamoyl phosphate contacts are provided by residues 56–59 (STRT), glutamine 83, arginine 107, and 134–137 (HPTQ). L-ornithine-binding positions include asparagine 168, aspartate 232, and 236–237 (SM). Carbamoyl phosphate-binding positions include 274-275 (CL) and arginine 320.

It belongs to the aspartate/ornithine carbamoyltransferase superfamily. OTCase family.

The protein localises to the cytoplasm. The catalysed reaction is carbamoyl phosphate + L-ornithine = L-citrulline + phosphate + H(+). Its pathway is amino-acid biosynthesis; L-arginine biosynthesis; L-arginine from L-ornithine and carbamoyl phosphate: step 1/3. Its function is as follows. Reversibly catalyzes the transfer of the carbamoyl group from carbamoyl phosphate (CP) to the N(epsilon) atom of ornithine (ORN) to produce L-citrulline. In Erwinia tasmaniensis (strain DSM 17950 / CFBP 7177 / CIP 109463 / NCPPB 4357 / Et1/99), this protein is Ornithine carbamoyltransferase.